The following is a 1233-amino-acid chain: Capping protein-inhibiting regulator of actin dynamics (1233 aa).

Phosphoserine is present on residues serine 7, serine 28, and serine 132. 3 disordered regions span residues 92-136 (AENK…SAGT), 157-224 (AKHK…RRRQ), and 269-527 (LLEE…WQEV). The segment covering 157-176 (AKHKLAVKPKKQRVSKKHRR) has biased composition (basic residues). Composition is skewed to basic and acidic residues over residues 200–211 (PGEDKPTWHEEE), 282–293 (EAERAPREEQQR), 302–322 (DAER…ERRR), and 329–362 (AEER…KRQE). The segment at 321–472 (RRLQAQAQAE…EQQGRSGDFQ (152 aa)) is required for interaction with actin-capping proteins. 2 stretches are compositionally biased toward acidic residues: residues 363 to 376 (EEEA…EQQE) and 397 to 407 (EEEDLGEEEEE). Serine 420 is subject to Phosphoserine. Basic and acidic residues-rich tracts occupy residues 432 to 447 (DQER…HSEE) and 505 to 527 (VERK…WQEV). Position 556 is a phosphoserine (serine 556). At threonine 559 the chain carries Phosphothreonine. Disordered regions lie at residues 560–586 (PAKD…HALP), 629–788 (HAEA…TTEG), 815–1082 (EFTT…TEKV), and 1097–1186 (QKGF…ISDS). A compositionally biased stretch (basic and acidic residues) spans 677 to 707 (KNAESDPRSSERDQLRPGDESTPRGRCDSRG). The segment covering 732–742 (GTETSKQSTEA) has biased composition (polar residues). The segment covering 768 to 783 (ELGKGPEKSEMHREPA) has biased composition (basic and acidic residues). 2 stretches are compositionally biased toward polar residues: residues 815 to 825 (EFTTSSDSETA) and 852 to 863 (TNYSLRFNCDQQ). Residues 876–889 (GDSADAGPPAAGSA) are compositionally biased toward low complexity. Over residues 908 to 921 (QERKQAPSTRRDSA) the composition is skewed to basic and acidic residues. The segment covering 956–967 (PLAQKPALAPKP) has biased composition (low complexity). Residue threonine 971 is modified to Phosphothreonine. Serine 975 and serine 1017 each carry phosphoserine. Basic and acidic residues predominate over residues 994-1040 (GRPDPEPSEPSKEDQESSDRRPPSPPGPEERKGQKRDEEEEATERKP). Positions 1047–1057 (ATQQEKPSQTP) are enriched in polar residues. 2 stretches are compositionally biased toward basic and acidic residues: residues 1059-1082 (AGRK…TEKV) and 1099-1124 (GFRE…KLSK). Residues 1127-1139 (VSVSVQPGSSSVS) show a composition bias toward low complexity. Positions 1151–1170 (PEEKRPETAVSRLERREQLK) are enriched in basic and acidic residues. Polar residues predominate over residues 1174-1183 (TLPTSVTVEI).

Directly interacts with actin-capping proteins CAPZA1, CAPZA2 and CAPZB; this interaction decreases the binding of capping proteins to actin. Expressed in intestinal epithelial cells (at protein level).

The protein localises to the cytoplasm. The protein resides in the cytosol. Its function is as follows. Involved in epithelial cell integrity by acting on the maintenance of the actin cytoskeleton. Positively regulates the actin polymerization, by inhibiting the interaction of actin-capping proteins with actin. The chain is Capping protein-inhibiting regulator of actin dynamics from Homo sapiens (Human).